We begin with the raw amino-acid sequence, 183 residues long: Peptide deformylase-like (183 aa).

The active site involves Glu140.

The protein belongs to the polypeptide deformylase family.

The protein is Peptide deformylase-like of Rickettsia conorii (strain ATCC VR-613 / Malish 7).